The sequence spans 140 residues: Holo-[acyl-carrier-protein] synthase (140 aa).

Asp8 and Glu62 together coordinate Mg(2+).

Belongs to the P-Pant transferase superfamily. AcpS family. Mg(2+) serves as cofactor.

The protein localises to the cytoplasm. It carries out the reaction apo-[ACP] + CoA = holo-[ACP] + adenosine 3',5'-bisphosphate + H(+). Its function is as follows. Transfers the 4'-phosphopantetheine moiety from coenzyme A to a Ser of acyl-carrier-protein. This Cupriavidus taiwanensis (strain DSM 17343 / BCRC 17206 / CCUG 44338 / CIP 107171 / LMG 19424 / R1) (Ralstonia taiwanensis (strain LMG 19424)) protein is Holo-[acyl-carrier-protein] synthase.